Consider the following 619-residue polypeptide: MSQETDNKRLVVLVPNDAVFNPRRAYTSEDEAWKSYLENPLTAATKAMMSINGDEESAAAIGLLYDYYKVPREKRLLSLNKINEGHEDQDKRNCLPANETPSNLSTGENRVQVLKTVPVNLSLNNDTVESSNREKYTTSLSESPQPAPASAVTVVKAEEFTPVFMAPSVPYRSDGEEPRGVIFEQTHFGVHSITTHSDYLKDDQRSTPDSTYNESFKETTEKYRTPSVGTEEFLYEQTASSTFQYTLEATKSLRQKQGEGPMTYLNKGQFYAITLSETGANKCFRHPISKVRSVIMVVFSEDKNRDEQLKYWKYWHSRQHTAKQRVLDIADYKESFNTIGNIEEIAYNAVSFTWDVNEEAKIFITVNCLSTDFSSQKGVKGLPLMIQIDTYSYNNRSNKPIHRAYCQIKVFCDKGAERKIRDEERKQNRKKGKSQAAQAQCNNSADGKLSAVPLQKKSDITFFKTMTDLDVQPVLFIPDVHFGNLQRTGQVFYNTDDDIEGGVLVKRLLRPVDEDYGPPAPKQMKEGSRKVLLYVRKETDEVFDALMLKYPTVKGLLEAISEKYGIPVEKIVKIYKKSKKGILVNMDDNIIEHYSNEDTFILNVESLAEQGYKITLTEI.

A transcription activation region spans residues 1 to 90; it reads MSQETDNKRL…KINEGHEDQD (90 aa). 3 disordered regions span residues 86–108, 125–147, and 423–444; these read HEDQ…STGE, NDTV…PQPA, and EERK…CNNS. Residues 99–108 show a composition bias toward polar residues; sequence ETPSNLSTGE. One can recognise a Grh/CP2 DB domain in the interval 239–477; the sequence is ASSTFQYTLE…DLDVQPVLFI (239 aa).

The protein belongs to the grh/CP2 family. Grainyhead subfamily.

Its subcellular location is the nucleus. It is found in the membrane. Functionally, transcription factor playing an important role in primary neurulation and in epithelial development. Binds directly to the consensus DNA sequence 5'-AACCGGTT-3' acting as an activator and repressor on distinct target genes. In Xenopus tropicalis (Western clawed frog), this protein is Grainyhead-like protein 2 homolog (grhl2).